Consider the following 265-residue polypeptide: MGQILGKIMMSHQPQPQEERSPQRSTSGYPLQEVVDDEVLGPSAPGVDPSPPRRSLGWKRKRECLDESDDEPEKELAPEPEETWVAETLCGLKMKAKRRRVSLVLPEYYEAFNRLLEDPVIKRLLAWDKDLRVSDKYLLAMVIAYFSRAGLPSWQYQRIHFFLALYLANDMEEDDEAPKQNIFYFLYEETRSHIPLLSELWFQLCRYMNPRARKNCSQIALFRKYRFHFFCSMRCRAWVSLEELEEIQAYDPEHWVWARDRAHLS.

Residues 1 to 80 (MGQILGKIMM…EPEKELAPEP (80 aa)) are disordered. The span at 66-80 (DESDDEPEKELAPEP) shows a compositional bias: acidic residues.

It belongs to the Speedy/Ringo family.

The chain is Speedy protein E13 from Homo sapiens (Human).